The chain runs to 112 residues: Putative pterin-4-alpha-carbinolamine dehydratase (112 aa).

This sequence belongs to the pterin-4-alpha-carbinolamine dehydratase family.

It catalyses the reaction (4aS,6R)-4a-hydroxy-L-erythro-5,6,7,8-tetrahydrobiopterin = (6R)-L-erythro-6,7-dihydrobiopterin + H2O. The chain is Putative pterin-4-alpha-carbinolamine dehydratase from Shewanella sp. (strain MR-7).